A 342-amino-acid polypeptide reads, in one-letter code: L-threonine 3-dehydrogenase (342 aa).

Cys38 is a Zn(2+) binding site. Residues Thr40 and His43 each act as charge relay system in the active site. His63 and Glu64 together coordinate Zn(2+). NAD(+) is bound by residues Ile175, Asp195, Arg200, 263–265, and 287–288; these read LGI and VY.

Belongs to the zinc-containing alcohol dehydrogenase family. In terms of assembly, homotetramer. It depends on Zn(2+) as a cofactor.

It is found in the cytoplasm. It carries out the reaction L-threonine + NAD(+) = (2S)-2-amino-3-oxobutanoate + NADH + H(+). It participates in amino-acid degradation; L-threonine degradation via oxydo-reductase pathway; glycine from L-threonine: step 1/2. Catalyzes the NAD(+)-dependent oxidation of L-threonine to 2-amino-3-ketobutyrate. This chain is L-threonine 3-dehydrogenase, found in Ruegeria pomeroyi (strain ATCC 700808 / DSM 15171 / DSS-3) (Silicibacter pomeroyi).